The sequence spans 340 residues: MNELDSLRQEAESLKNAIRDARKAACDTSLLQAATSLEPIGRIQMRTRRTLRGHLAKIYAMHWGNDSRNLVSASQDGKLIVWDSHTTNKVHAIPLRSSWVMTCAYAPSGSYVACGGLDNMCSIYNLKTREGNVRVSRELPGHGGYLSCCRFLDDNQIVTSSGDMSCGLWDIETGLQVTSFLGHTGDVMALSLAPQCKTFVSGACDASAKLWDIREGVCKQTFPGHESDINAVTFFPNGQAFATGSDDATCRLFDIRADQELAMYSHDNIICGITSVAFSKSGRLLLAGYDDFNCNVWDTMKAERSGILAGHDNRVSCLGVTENGMAVATGSWDSFLRVWN.

S29 carries the post-translational modification Phosphoserine. WD repeat units follow at residues 53–92, 95–134, 141–179, 182–221, 224–263, 268–307, and 310–340; these read GHLA…KVHA, LRSS…GNVR, GHGG…QVTS, GHTG…CKQT, GHES…ELAM, NIIC…RSGI, and GHDN…RVWN.

Belongs to the WD repeat G protein beta family. G proteins are composed of 3 units, alpha, beta and gamma. In terms of tissue distribution, expressed in the brain neuropil and cortex, and the thoracic ganglion (at protein level). Expression detected in eye at protein level but not at mRNA level, suggesting cross reactivity of antibodies to the similar Gbeta76C protein.

Its function is as follows. Guanine nucleotide-binding proteins (G proteins) are involved as a modulator or transducer in various transmembrane signaling systems. The beta and gamma chains are required for the GTPase activity, for replacement of GDP by GTP, and for G protein-effector interaction. This Drosophila melanogaster (Fruit fly) protein is Guanine nucleotide-binding protein subunit beta-1 (Gbeta13F).